The following is a 207-amino-acid chain: Adenine phosphoribosyltransferase (207 aa).

Residues 1 to 33 (MRPAKPPQSKERKRSKSLTSADHDNSPQRAETA) are disordered.

It belongs to the purine/pyrimidine phosphoribosyltransferase family. Homodimer.

It localises to the cytoplasm. The catalysed reaction is AMP + diphosphate = 5-phospho-alpha-D-ribose 1-diphosphate + adenine. It functions in the pathway purine metabolism; AMP biosynthesis via salvage pathway; AMP from adenine: step 1/1. Functionally, catalyzes a salvage reaction resulting in the formation of AMP, that is energically less costly than de novo synthesis. The protein is Adenine phosphoribosyltransferase of Corynebacterium jeikeium (strain K411).